Consider the following 189-residue polypeptide: Apolipoprotein D (189 aa).

An N-terminal signal peptide occupies residues 1–20; sequence MATMLLLLATLAGLFTTTEG. Q21 is subject to Pyrrolidone carboxylic acid. Intrachain disulfides connect C28–C134 and C61–C185. N-linked (GlcNAc...) asparagine glycans are attached at residues N65 and N98.

This sequence belongs to the calycin superfamily. Lipocalin family. In terms of assembly, homodimer. As to expression, expressed in liver, kidney, bladder, adrenal, cerebrum, duodenum, testis, lung, spleen, pancreas, heart and skin.

The protein localises to the secreted. APOD occurs in the macromolecular complex with lecithin-transport and binding of bilin. Appears to be able to transport a variety of ligands in a number of different contexts. This Rattus norvegicus (Rat) protein is Apolipoprotein D (Apod).